The primary structure comprises 60 residues: Ixodegrin YY-39 (60 aa).

Positions 1-21 are cleaved as a signal peptide; it reads MNAALIAALLILGALTLDATA. A Cell attachment site motif is present at residues 49–51; sequence RGD.

It belongs to the ixodegrin family. In terms of processing, contains 3 disulfide bonds. As to expression, expressed in salivary glands.

It localises to the secreted. In terms of biological role, tick salivary platelet aggregation inhibitor that plays an important part in the anti-hemostatic strategy of ticks. Inhibits platelet aggregation induced by ADP, thrombin and thromboxane A2 (TXA2). Blocks platelet adhesion to soluble collagen (most probably through the binding to alpha-2/beta-1 integrin (ITGA2/ITGB1)) and binds to purified glycoprotein IIb/IIIa (ITGA2B/ITGB3) in a dose-dependent manner. In vivo, reduces thrombus weight effectively in a rat arteriovenous shunt model and inhibits thrombosis in a carrageenan-induced mouse tail thrombosis model. This chain is Ixodegrin YY-39, found in Ixodes scapularis (Black-legged tick).